Here is a 111-residue protein sequence, read N- to C-terminus: Large ribosomal subunit protein uL22 (111 aa).

Belongs to the universal ribosomal protein uL22 family. Part of the 50S ribosomal subunit.

In terms of biological role, this protein binds specifically to 23S rRNA; its binding is stimulated by other ribosomal proteins, e.g. L4, L17, and L20. It is important during the early stages of 50S assembly. It makes multiple contacts with different domains of the 23S rRNA in the assembled 50S subunit and ribosome. Its function is as follows. The globular domain of the protein is located near the polypeptide exit tunnel on the outside of the subunit, while an extended beta-hairpin is found that lines the wall of the exit tunnel in the center of the 70S ribosome. This is Large ribosomal subunit protein uL22 from Pelobacter propionicus (strain DSM 2379 / NBRC 103807 / OttBd1).